The sequence spans 155 residues: Small ribosomal subunit protein uS7 (155 aa).

It belongs to the universal ribosomal protein uS7 family. As to quaternary structure, part of the 30S ribosomal subunit. Contacts proteins S9 and S11.

Its function is as follows. One of the primary rRNA binding proteins, it binds directly to 16S rRNA where it nucleates assembly of the head domain of the 30S subunit. Is located at the subunit interface close to the decoding center, probably blocks exit of the E-site tRNA. The chain is Small ribosomal subunit protein uS7 from Thermosipho africanus (strain TCF52B).